Here is a 72-residue protein sequence, read N- to C-terminus: DNA-directed RNA polymerase subunit omega (72 aa).

The protein belongs to the RNA polymerase subunit omega family. The RNAP catalytic core consists of 2 alpha, 1 beta, 1 beta' and 1 omega subunit. When a sigma factor is associated with the core the holoenzyme is formed, which can initiate transcription.

The enzyme catalyses RNA(n) + a ribonucleoside 5'-triphosphate = RNA(n+1) + diphosphate. Its function is as follows. Promotes RNA polymerase assembly. Latches the N- and C-terminal regions of the beta' subunit thereby facilitating its interaction with the beta and alpha subunits. This is DNA-directed RNA polymerase subunit omega from Staphylococcus aureus (strain Mu3 / ATCC 700698).